A 115-amino-acid polypeptide reads, in one-letter code: U3-lycotoxin-Ls1k (115 aa).

Residues 1 to 20 form the signal peptide; that stretch reads MKFVLLFGVLLVTLFSYSSA. The propeptide occupies 21–44; that stretch reads EMLDDFDQADEDELLSLIEKEEAR. 4 disulfide bridges follow: Cys48-Cys63, Cys55-Cys72, Cys62-Cys87, and Cys74-Cys85.

This sequence belongs to the neurotoxin 19 (CSTX) family. 01 subfamily. In terms of tissue distribution, expressed by the venom gland.

It is found in the secreted. This is U3-lycotoxin-Ls1k from Lycosa singoriensis (Wolf spider).